A 264-amino-acid polypeptide reads, in one-letter code: Regulatory protein RecX (264 aa).

This sequence belongs to the RecX family.

It localises to the cytoplasm. Its function is as follows. Modulates RecA activity. The polypeptide is Regulatory protein RecX (Lacticaseibacillus casei (strain BL23) (Lactobacillus casei)).